A 324-amino-acid chain; its full sequence is Probable fructokinase-5 (324 aa).

This sequence belongs to the carbohydrate kinase PfkB family.

It catalyses the reaction D-fructose + ATP = D-fructose 6-phosphate + ADP + H(+). The protein operates within glycan biosynthesis; starch biosynthesis. Its function is as follows. May play an important role in maintaining the flux of carbon towards starch formation. This chain is Probable fructokinase-5, found in Arabidopsis thaliana (Mouse-ear cress).